A 376-amino-acid polypeptide reads, in one-letter code: UDP-N-acetylglucosamine 2-epimerase (376 aa).

Substrate is bound by residues arginine 10, lysine 15, aspartate 95, glutamate 117, histidine 213, glutamine 271, phenylalanine 276, 290-292, glutamate 296, and arginine 313; that span reads SGG.

This sequence belongs to the UDP-N-acetylglucosamine 2-epimerase family. In terms of assembly, homodimer.

The protein resides in the cytoplasm. It catalyses the reaction UDP-N-acetyl-alpha-D-glucosamine = UDP-N-acetyl-alpha-D-mannosamine. It functions in the pathway bacterial outer membrane biogenesis; enterobacterial common antigen biosynthesis. Catalyzes the reversible epimerization at C-2 of UDP-N-acetylglucosamine (UDP-GlcNAc) and thereby provides bacteria with UDP-N-acetylmannosamine (UDP-ManNAc), the activated donor of ManNAc residues. The chain is UDP-N-acetylglucosamine 2-epimerase from Salmonella typhimurium (strain LT2 / SGSC1412 / ATCC 700720).